Here is a 144-residue protein sequence, read N- to C-terminus: MSKKQEVKYYGSSAGKDQLVYGVVHIYASFNDTFVHVTDMSGRETFCKVTGGMKVKADRDESSPYAAMMAAQDVVARCKECGINALHVKMRATGGVGTKSPGPGAQAALRALARAGMKIGRIEDVTPVPTDSTRRKGSRRGRRL.

Residues 123 to 144 (EDVTPVPTDSTRRKGSRRGRRL) form a disordered region. A compositionally biased stretch (basic residues) spans 135–144 (RKGSRRGRRL).

This sequence belongs to the universal ribosomal protein uS11 family.

The protein is Small ribosomal subunit protein uS11 (RPS14) of Trypanosoma brucei brucei.